Consider the following 223-residue polypeptide: Ubiquitin-conjugating enzyme E2 S-A (223 aa).

The region spanning 11 to 157 is the UBC core domain; it reads HIIRLVYKEV…ARLLTEIHGG (147 aa). Catalysis depends on Cys-95, which acts as the Glycyl thioester intermediate. The disordered stretch occupies residues 170–223; the sequence is QDLASGASASSADPMIPGVLGGAEGPMAKKHAGERDKKLAAKKKLDKKRALRRL. Over residues 209-223 the composition is skewed to basic residues; the sequence is AAKKKLDKKRALRRL.

This sequence belongs to the ubiquitin-conjugating enzyme family.

It catalyses the reaction S-ubiquitinyl-[E1 ubiquitin-activating enzyme]-L-cysteine + [E2 ubiquitin-conjugating enzyme]-L-cysteine = [E1 ubiquitin-activating enzyme]-L-cysteine + S-ubiquitinyl-[E2 ubiquitin-conjugating enzyme]-L-cysteine.. It functions in the pathway protein modification; protein ubiquitination. Its function is as follows. Catalyzes the covalent attachment of ubiquitin to other proteins. Acts as an essential factor of the anaphase promoting complex/cyclosome (APC/C), a cell cycle-regulated ubiquitin ligase that controls progression through mitosis. Acts by specifically elongating 'Lys-11'-linked polyubiquitin chains initiated by the E2 enzyme ube2c/ubch10 on APC/C substrates, enhancing the degradation of APC/C substrates by the proteasome and promoting mitotic exit. This chain is Ubiquitin-conjugating enzyme E2 S-A (ube2s-a), found in Xenopus laevis (African clawed frog).